The following is a 127-amino-acid chain: Fluoride-specific ion channel FluC (127 aa).

A run of 4 helical transmembrane segments spans residues 4–24, 38–58, 71–91, and 104–124; these read LSVL…RYLI, YGTL…IAAF, IIGL…MDNV, and LNVL…FQLL. Na(+) contacts are provided by G78 and T81.

This sequence belongs to the fluoride channel Fluc/FEX (TC 1.A.43) family.

It localises to the cell inner membrane. The enzyme catalyses fluoride(in) = fluoride(out). Its activity is regulated as follows. Na(+) is not transported, but it plays an essential structural role and its presence is essential for fluoride channel function. In terms of biological role, fluoride-specific ion channel. Important for reducing fluoride concentration in the cell, thus reducing its toxicity. The polypeptide is Fluoride-specific ion channel FluC (Vibrio campbellii (strain ATCC BAA-1116)).